The primary structure comprises 283 residues: Bifunctional protein FolD 2 (283 aa).

Residues 165 to 167, Thr192, and Val233 contribute to the NADP(+) site; that span reads GRG.

The protein belongs to the tetrahydrofolate dehydrogenase/cyclohydrolase family. As to quaternary structure, homodimer.

The enzyme catalyses (6R)-5,10-methylene-5,6,7,8-tetrahydrofolate + NADP(+) = (6R)-5,10-methenyltetrahydrofolate + NADPH. It catalyses the reaction (6R)-5,10-methenyltetrahydrofolate + H2O = (6R)-10-formyltetrahydrofolate + H(+). The protein operates within one-carbon metabolism; tetrahydrofolate interconversion. In terms of biological role, catalyzes the oxidation of 5,10-methylenetetrahydrofolate to 5,10-methenyltetrahydrofolate and then the hydrolysis of 5,10-methenyltetrahydrofolate to 10-formyltetrahydrofolate. In Nocardioides sp. (strain ATCC BAA-499 / JS614), this protein is Bifunctional protein FolD 2.